We begin with the raw amino-acid sequence, 321 residues long: Phosphate-import protein PhnD (321 aa).

A signal peptide spans 1–22; that stretch reads MKIRAHHKIATAAACVALLASA. The N-palmitoyl cysteine moiety is linked to residue cysteine 23. A lipid anchor (S-diacylglycerol cysteine) is attached at cysteine 23.

Belongs to the phosphate/phosphite/phosphonate binding protein family. As to quaternary structure, the complex is composed of two ATP-binding proteins (PhnC), two transmembrane proteins (PhnE) and a solute-binding protein (PhnD).

The protein resides in the cell membrane. Its function is as follows. Part of the ABC transporter complex PhnCDE involved in phosphate import. Responsible for phosphate binding. The protein is Phosphate-import protein PhnD (phnD) of Mycolicibacterium smegmatis (strain ATCC 700084 / mc(2)155) (Mycobacterium smegmatis).